Consider the following 828-residue polypeptide: Putative alpha-1,3-mannosyltransferase MNN12 (828 aa).

The Cytoplasmic segment spans residues 1 to 13 (MIEKLTIKRSRQK). A helical membrane pass occupies residues 14–34 (VIAYSVIIIWLMIVNIWLLNN). Residues 35–828 (YHLNSSTLTR…YYGDVWVGME (794 aa)) are Lumenal-facing. N-linked (GlcNAc...) asparagine glycosylation is present at Asn38. A disordered region spans residues 80–104 (HQEEDVPNSQSTDNSLIKPTSPAKN). Residues 86-103 (PNSQSTDNSLIKPTSPAK) are compositionally biased toward polar residues. 3 N-linked (GlcNAc...) asparagine glycosylation sites follow: Asn247, Asn437, and Asn591.

This sequence belongs to the MNN1/MNT family.

It localises to the golgi apparatus membrane. The protein operates within protein modification; protein glycosylation. Functionally, responsible for addition of the terminal mannose residues to the outer chain of core N-linked polysaccharides and to O-linked mannotriose. Implicated in late Golgi modifications. In Candida albicans (strain SC5314 / ATCC MYA-2876) (Yeast), this protein is Putative alpha-1,3-mannosyltransferase MNN12 (MNN12).